The chain runs to 289 residues: Acetyl-coenzyme A carboxylase carboxyl transferase subunit beta (289 aa).

The CoA carboxyltransferase N-terminal domain maps to 24-289 (LWIKCPESGE…NSPRRAPIPA (266 aa)).

It belongs to the AccD/PCCB family. As to quaternary structure, acetyl-CoA carboxylase is a heterohexamer composed of biotin carboxyl carrier protein (AccB), biotin carboxylase (AccC) and two subunits each of ACCase subunit alpha (AccA) and ACCase subunit beta (AccD).

The protein localises to the cytoplasm. The enzyme catalyses N(6)-carboxybiotinyl-L-lysyl-[protein] + acetyl-CoA = N(6)-biotinyl-L-lysyl-[protein] + malonyl-CoA. The protein operates within lipid metabolism; malonyl-CoA biosynthesis; malonyl-CoA from acetyl-CoA: step 1/1. In terms of biological role, component of the acetyl coenzyme A carboxylase (ACC) complex. Biotin carboxylase (BC) catalyzes the carboxylation of biotin on its carrier protein (BCCP) and then the CO(2) group is transferred by the transcarboxylase to acetyl-CoA to form malonyl-CoA. This chain is Acetyl-coenzyme A carboxylase carboxyl transferase subunit beta, found in Beijerinckia indica subsp. indica (strain ATCC 9039 / DSM 1715 / NCIMB 8712).